The primary structure comprises 593 residues: Eukaryotic peptide chain release factor subunit 1 (593 aa).

The protein belongs to the eukaryotic release factor 1 family. Heterodimer of two subunits, one of which binds GTP.

It is found in the cytoplasm. Directs the termination of nascent peptide synthesis (translation) in response to the termination codons UAA, UAG and UGA. This chain is Eukaryotic peptide chain release factor subunit 1, found in Caenorhabditis elegans.